A 234-amino-acid chain; its full sequence is Fibroblast growth factor-binding protein 1 (234 aa).

An N-terminal signal peptide occupies residues 1–23 (MRTHGLTLLSLLLLAVPMLLVEA). Residues 25 to 59 (KEGRNRRGSKASADESLALGKPGKEPRSQPTNYPI) are disordered. 3 disulfide bridges follow: Cys71–Cys88, Cys97–Cys130, and Cys106–Cys142. Asn155 carries an N-linked (GlcNAc...) asparagine glycan. Residues 169–200 (MEPSPMDTVEVTTSSSPEKTQTMATKDPQCEE) are disordered. Ser172 carries an O-linked (GalNAc...) serine glycan. The segment covering 178 to 192 (EVTTSSSPEKTQTMA) has biased composition (polar residues). The interval 194 to 234 (KDPQCEEEDLKNQRKAALEYCGETWGSLCNFFLSMVQGSSC) is sufficient for interaction with FGF2 and FGF2-induced effects. 2 disulfide bridges follow: Cys198-Cys234 and Cys214-Cys222.

It belongs to the fibroblast growth factor-binding protein family. As to quaternary structure, found in a complex with FGFBP1, FGF1 and FGF2. Interacts with FGF1, FGF7, FGF10, FGF22 and HSPG2. Interacts with FGF2.

The protein localises to the secreted. The protein resides in the extracellular space. It localises to the cell membrane. Acts as a carrier protein that release fibroblast-binding factors (FGFs) from the extracellular matrix (EM) storage and thus enhance the mitogenic activity of FGFs. Enhances FGF2 signaling during tissue repair, angiogenesis and in tumor growth. The sequence is that of Fibroblast growth factor-binding protein 1 (FGFBP1) from Bos taurus (Bovine).